Reading from the N-terminus, the 218-residue chain is Adenylate kinase (218 aa).

ATP is bound at residue 10–15 (GAGKGT). The NMP stretch occupies residues 30–59 (STGDMLRAAVKEGSELGLKVKEIMNSGGLV). AMP contacts are provided by residues Thr-31, Arg-36, 57-59 (GLV), 85-88 (GFPR), and Gln-92. Residues 122 to 159 (GRRVHPGSGRVYHVDYNPPKEEGKDDVTGEALIQRDDD) form an LID region. ATP-binding positions include Arg-123 and 132–133 (VY). AMP-binding residues include Arg-156 and Arg-167. Gly-203 lines the ATP pocket.

The protein belongs to the adenylate kinase family. Monomer.

It localises to the cytoplasm. The enzyme catalyses AMP + ATP = 2 ADP. It functions in the pathway purine metabolism; AMP biosynthesis via salvage pathway; AMP from ADP: step 1/1. In terms of biological role, catalyzes the reversible transfer of the terminal phosphate group between ATP and AMP. Plays an important role in cellular energy homeostasis and in adenine nucleotide metabolism. This Chromohalobacter salexigens (strain ATCC BAA-138 / DSM 3043 / CIP 106854 / NCIMB 13768 / 1H11) protein is Adenylate kinase.